Here is a 257-residue protein sequence, read N- to C-terminus: Type I iodothyronine deiodinase (257 aa).

Topologically, residues 1 to 12 (MGLPGLGLLLKR) are extracellular. The chain crosses the membrane as a helical; Signal-anchor for type III membrane protein span at residues 13 to 33 (FGVLVRVALKVAVGKVLLTLW). The Cytoplasmic portion of the chain corresponds to 34–257 (PSAIRPHLLA…CRSSAQSPRL (224 aa)). Sec-126 is an active-site residue. Sec-126 is a non-standard amino acid (selenocysteine).

Belongs to the iodothyronine deiodinase family. As to quaternary structure, predominantly monomer. Can form homodimers but homodimerization is not essential for enzyme activity. In terms of tissue distribution, liver specific.

The protein localises to the cell membrane. The protein resides in the endoplasmic reticulum membrane. It localises to the basolateral cell membrane. It carries out the reaction 3,3',5-triiodo-L-thyronine + iodide + A + H(+) = L-thyroxine + AH2. The enzyme catalyses 3,3',5'-triiodo-L-thyronine + iodide + A + H(+) = L-thyroxine + AH2. It catalyses the reaction 3,3'-diiodo-L-thyronine + iodide + A + H(+) = 3,3',5'-triiodo-L-thyronine + AH2. The catalysed reaction is 3,3'-diiodo-L-thyronine + iodide + A + H(+) = 3,3',5-triiodo-L-thyronine + AH2. It carries out the reaction 3'-iodo-L-thyronine + iodide + A + H(+) = 3',5'-diiodo-L-thyronine + AH2. The enzyme catalyses 3-iodo-L-thyronine + iodide + A + H(+) = 3,5-diiodo-L-thyronine + AH2. It catalyses the reaction 3-iodo-L-thyronine + iodide + A + H(+) = 3,3'-diiodo-L-thyronine + AH2. The catalysed reaction is 3,3'-diiodothyronamine + iodide + A + H(+) = 3,3',5'-triiodothyronamine + AH2. It carries out the reaction 3'-iodothyronamine + iodide + A + H(+) = 3',5'-diiodothyronamine + AH2. The enzyme catalyses 3-iodothyronamine + iodide + A + H(+) = 3,3'-diiodothyronamine + AH2. It catalyses the reaction 3,3'-diiodothyronamine + iodide + A + H(+) = 3,3',5-triiodothyronamine + AH2. The catalysed reaction is 3-iodothyronamine + iodide + A + H(+) = 3,5-diiodothyronamine + AH2. It carries out the reaction 3,3'-diiodo-L-thyronine sulfate + iodide + A + H(+) = 3,3',5'-triiodo-L-thyronine sulfate + AH2. The enzyme catalyses 3,3',5'-triiodo-L-thyronine sulfate + iodide + A + H(+) = L-thyroxine sulfate + AH2. It catalyses the reaction 3,3'-diiodo-L-thyronine sulfate + iodide + A + H(+) = 3,3',5-triiodo-L-thyronine sulfate + AH2. In terms of biological role, plays a crucial role in the metabolism of thyroid hormones (TH) and has specific roles in TH activation and inactivation by deiodination. Catalyzes the deiodination of L-thyroxine (T4) to 3,5,3'-triiodothyronine (T3) and 3',5'-diiodothyronine (3',5'-T2) to 3'-monoiodothyronine (3'-T1) via outer-ring deiodination (ORD). Catalyzes the deiodination of T4 to 3,3',5'-triiodothyronine (rT3), T3 to 3,3'-diiodothyronine (3,3'-T2), 3,5-diiodothyronine (3,5-T2) to 3-monoiodothyronine (3-T1) and 3,3'-T2 to 3-T1 via inner-ring deiodination (IRD). Catalyzes the deiodination of rT3 to 3,3'-T2 via ORD. Catalyzes the phenolic ring deiodinations of 3,3',5'-triiodothyronamine, 3',5'-diiodothyronamine and 3,3'-diiodothyronamine as well as tyrosyl ring deiodinations of 3,5,3'-triiodothyronamine and 3,5-diiodothyronamine. Catalyzes the deiodination of L-thyroxine sulfate and 3,3',5-triiodo-L-thyronine sulfate via IRD and of 3,3',5'-triiodo-L-thyronine sulfate via ORD. In Suncus murinus (Asian house shrew), this protein is Type I iodothyronine deiodinase (DIO1).